We begin with the raw amino-acid sequence, 333 residues long: Gap junction alpha-4 protein (333 aa).

The Cytoplasmic portion of the chain corresponds to 1-20 (MGDWGFLEKLLDQVQEHSTV). A helical transmembrane segment spans residues 21-40 (VGKIWLTVLFIFRILILGLA). At 41-76 (GESVWGDEQSDFECNTAQPGCTNVCYDQAFPISHIR) the chain is on the extracellular side. The helical transmembrane segment at 77–99 (YWVLQFLFVSTPTLIYLGHVIYL) threads the bilayer. Residues 100–148 (SRREERLRQKEGELRALPSKDPHVERALAAIEHQMAKISVAEDGRLRIR) lie on the Cytoplasmic side of the membrane. A helical membrane pass occupies residues 149–171 (GALMGTYVISVLCKSVLEAGFLY). Topologically, residues 172 to 208 (GQWRLYGWTMEPVFVCQRAPCPHVVDCYVSRPTEKTI) are extracellular. The helical transmembrane segment at 209-231 (FIIFMLVVGVISLVLNLLELVHL) threads the bilayer. Topologically, residues 232 to 333 (LCRCVSREIK…NSSASKKQYV (102 aa)) are cytoplasmic. The segment at 292–333 (ANLTTEERLTSTRPPPFVNAAPQGGQKSSSRPNSSASKKQYV) is disordered. A compositionally biased stretch (low complexity) spans 318 to 333 (KSSSRPNSSASKKQYV).

The protein belongs to the connexin family. Alpha-type (group II) subfamily. As to quaternary structure, a connexon is composed of a hexamer of connexins. In terms of tissue distribution, highly expressed in lung.

The protein resides in the cell membrane. It is found in the cell junction. Its subcellular location is the gap junction. Its function is as follows. One gap junction consists of a cluster of closely packed pairs of transmembrane channels, the connexons, through which materials of low MW diffuse from one cell to a neighboring cell. This is Gap junction alpha-4 protein (Gja4) from Rattus norvegicus (Rat).